Consider the following 1057-residue polypeptide: Nuclear RNAi defective-3 protein (1057 aa).

Disordered stretches follow at residues 1-89 (MDLL…GLSV) and 344-388 (LTNS…ERTV). Positions 17 to 30 (STAKKPATSASSTP) are enriched in low complexity. Basic and acidic residues-rich tracts occupy residues 67-81 (PKRE…DPKR) and 356-388 (GGRE…ERTV). Residues 387 to 500 (TVSHYQRQFQ…YPMELMSILP (114 aa)) form the PAZ domain. The region spanning 677-1001 (GIIAEKRPDM…LAKRGHNNYK (325 aa)) is the Piwi domain.

The protein resides in the cytoplasm. The protein localises to the nucleus. In terms of biological role, transports small interfering RNAs (siRNAs) from the cytoplasm to the nucleus. Required for RNA interference (RNAi) in nuclei. Required for exogenous RNAi-induced H3K27 methylation. This is Nuclear RNAi defective-3 protein (nrde-3) from Caenorhabditis elegans.